The sequence spans 260 residues: Taurine import ATP-binding protein TauB (260 aa).

Residues 6–235 (AQQVSVVYAS…RYAHGEPVRS (230 aa)) enclose the ABC transporter domain. Position 40–47 (40–47 (GASGCGKS)) interacts with ATP.

Belongs to the ABC transporter superfamily. Taurine importer (TC 3.A.1.17.1) family. The complex is composed of two ATP-binding proteins (TauB), two transmembrane proteins (TauC) and a solute-binding protein (TauA).

The protein resides in the cell inner membrane. It catalyses the reaction taurine(out) + ATP + H2O = taurine(in) + ADP + phosphate + H(+). In terms of biological role, part of the ABC transporter complex TauABC involved in taurine import. Responsible for energy coupling to the transport system. The chain is Taurine import ATP-binding protein TauB from Burkholderia pseudomallei (strain K96243).